Here is a 327-residue protein sequence, read N- to C-terminus: Trypsin-like protease try-5 (327 aa).

The first 21 residues, methionine 1–leucine 21, serve as a signal peptide directing secretion. The Peptidase S1 domain maps to alanine 43–alanine 327. Cysteine 73 and cysteine 89 form a disulfide bridge. Catalysis depends on charge relay system residues histidine 88 and aspartate 173. Residue asparagine 207 is glycosylated (N-linked (GlcNAc...) asparagine). 2 disulfides stabilise this stretch: cysteine 242/cysteine 256 and cysteine 266/cysteine 296. Serine 270 acts as the Charge relay system in catalysis.

Belongs to the peptidase S1 family. Specifically expressed in the male gonad including the seminal vesicle, the valve region and the vas deferens.

The protein localises to the secreted. Its subcellular location is the cytoplasmic vesicle. It is found in the secretory vesicle lumen. With respect to regulation, in the male gonad, probably maintained inactive by swm-1. Functionally, serine protease which, in males, acts as a promoting signal during mating to activate sperm. The chain is Trypsin-like protease try-5 from Caenorhabditis elegans.